A 391-amino-acid polypeptide reads, in one-letter code: Chorismate synthase (391 aa).

Arg48 contacts NADP(+). FMN contacts are provided by residues 126-128 (RSS), Gly287, 302-306 (KPTSS), and Arg329.

The protein belongs to the chorismate synthase family. The cofactor is FMNH2.

The enzyme catalyses 5-O-(1-carboxyvinyl)-3-phosphoshikimate = chorismate + phosphate. The protein operates within metabolic intermediate biosynthesis; chorismate biosynthesis; chorismate from D-erythrose 4-phosphate and phosphoenolpyruvate: step 7/7. Its function is as follows. Catalyzes the anti-1,4-elimination of the C-3 phosphate and the C-6 proR hydrogen from 5-enolpyruvylshikimate-3-phosphate (EPSP) to yield chorismate, which is the branch point compound that serves as the starting substrate for the three terminal pathways of aromatic amino acid biosynthesis. This reaction introduces a second double bond into the aromatic ring system. The chain is Chorismate synthase from Sulfolobus acidocaldarius (strain ATCC 33909 / DSM 639 / JCM 8929 / NBRC 15157 / NCIMB 11770).